Here is a 182-residue protein sequence, read N- to C-terminus: T-cell surface glycoprotein CD3 gamma chain (182 aa).

The first 22 residues, 1–22, serve as a signal peptide directing secretion; that stretch reads MEQGKGLAVLILAIILLQGTLA. At 23–116 the chain is on the extracellular side; it reads QSIKGNHLVK…CIELNAATIS (94 aa). The 58-residue stretch at 37–94 folds into the Ig-like domain; sequence QEDGSVLLTCDAEAKNITWFKDGKMIGFLTEDKKKWNLGSNAKDPRGMYQCKGSQNKS. Cys46 and Cys87 are joined by a disulfide. N-linked (GlcNAc...) asparagine glycosylation is found at Asn52 and Asn92. The helical transmembrane segment at 117–137 threads the bilayer; the sequence is GFLFAEIVSIFVLAVGVYFIA. The Cytoplasmic segment spans residues 138 to 182; the sequence is GQDGVRQSRASDKQTLLPNDQLYQPLKDREDDQYSHLQGNQLRRN. Ser145 bears the Phosphoserine mark. Ser148 is modified (phosphoserine; by PKC). Residues 149-177 form the ITAM domain; it reads DKQTLLPNDQLYQPLKDREDDQYSHLQGN. A Di-leucine motif motif is present at residues 153 to 154; the sequence is LL.

As to quaternary structure, the TCR-CD3 complex is composed of a CD3D/CD3E and a CD3G/CD3E heterodimers that preferentially associate with TCRalpha and TCRbeta, respectively, to form TCRalpha/CD3E/CD3G and TCRbeta/CD3G/CD3E trimers. In turn, the hexamer interacts with CD3Z homodimer to form the TCR-CD3 complex. Alternatively, TCRalpha and TCRbeta can be replaced by TCRgamma and TCRdelta. In terms of processing, phosphorylated on Tyr residues after T-cell receptor triggering by LCK in association with CD4/CD8. Phosphorylated also by PKC; leading to the TCR complex down-regulation. Phosphorylated on Tyr residues after T-cell receptor triggering by LCK in association with CD4/CD8.

It is found in the cell membrane. Functionally, part of the TCR-CD3 complex present on T-lymphocyte cell surface that plays an essential role in adaptive immune response. When antigen presenting cells (APCs) activate T-cell receptor (TCR), TCR-mediated signals are transmitted across the cell membrane by the CD3 chains CD3D, CD3E, CD3G and CD3Z. All CD3 chains contain immunoreceptor tyrosine-based activation motifs (ITAMs) in their cytoplasmic domain. Upon TCR engagement, these motifs become phosphorylated by Src family protein tyrosine kinases LCK and FYN, resulting in the activation of downstream signaling pathways. In addition to this role of signal transduction in T-cell activation, CD3G plays an essential role in the dynamic regulation of TCR expression at the cell surface. Indeed, constitutive TCR cycling is dependent on the di-leucine-based (diL) receptor-sorting motif present in CD3G. The protein is T-cell surface glycoprotein CD3 gamma chain (CD3G) of Homo sapiens (Human).